A 350-amino-acid polypeptide reads, in one-letter code: UDP-rhamnose/UDP-galactose transporter 3 (350 aa).

10 helical membrane-spanning segments follow: residues 12 to 32 (AVSD…IIMA), 41 to 61 (GFAF…TALV), 81 to 101 (LIWF…SLML), 104 to 124 (VGFY…MEWI), 133 to 153 (EVKI…VTDV), 160 to 180 (FICA…IGSL), 200 to 220 (AFSL…KFIM), 224 to 244 (MSSG…FCNI), 257 to 277 (SFQV…WLLF), and 286 to 306 (VAGM…MELE).

Belongs to the TPT transporter family. TPT (TC 2.A.7.9) subfamily.

It is found in the golgi apparatus membrane. Nucleotide-sugar transporter that transports UDP-rhamnose or UDP-galactose and UMP in a strict counter-exchange mode. In Arabidopsis thaliana (Mouse-ear cress), this protein is UDP-rhamnose/UDP-galactose transporter 3.